The chain runs to 100 residues: Vesicle-associated membrane protein 3 (100 aa).

The residue at position 2 (Ser2) is an N-acetylserine. Topologically, residues 2–77 (STGPTAATGS…KRKYWWKNCK (76 aa)) are cytoplasmic. Residues 14-74 (RLQQTQNQVD…AKLKRKYWWK (61 aa)) form the v-SNARE coiled-coil homology domain. Glycyl lysine isopeptide (Lys-Gly) (interchain with G-Cter in ubiquitin) cross-links involve residues Lys66, Lys68, and Lys77. The helical; Anchor for type IV membrane protein transmembrane segment at 78–98 (MWAIGITVLVIFIIIIIVWVV) threads the bilayer. Residues 99–100 (SS) lie on the Vesicular side of the membrane.

The protein belongs to the synaptobrevin family. Interacts with POPDC1 (via the C-terminus cytoplasmic tail). Interacts with BCAP31; involved in VAMP3 export from the endoplasmic reticulum. Interacts with BAIAP3; this interaction is increased in the presence of calcium. Interacts with PICALM. In terms of processing, ubiquitinated by RNF167 at Lys-66, Lys-68 and Lys-77, regulating the recycling endosome pathway. (Microbial infection) Targeted and hydrolyzed by C.botulinum neurotoxin type B (BoNT/B, botB) which hydrolyzes the 59-Gln-|-Phe-60 bond and probably inhibits neurotransmitter release. Post-translationally, (Microbial infection) Targeted and hydrolyzed by C.botulinum neurotoxin type D (BoNT/D, botD) which hydrolyzes the 42-Lys-|-Leu-43 bond and probably inhibits neurotransmitter release. Note that humans are not known to be infected by C.botulinum type D. In terms of processing, (Microbial infection) Targeted and hydrolyzed by C.botulinum neurotoxin type F (BoNT/F, botF) which hydrolyzes the 41-Gln-|-Lys-42 bond and probably inhibits neurotransmitter release.

It localises to the early endosome membrane. The protein resides in the recycling endosome membrane. The protein localises to the synapse. Its subcellular location is the synaptosome. In terms of biological role, SNARE involved in vesicular transport from the late endosomes to the trans-Golgi network. This chain is Vesicle-associated membrane protein 3 (VAMP3), found in Homo sapiens (Human).